A 74-amino-acid polypeptide reads, in one-letter code: MKSFYHYLMKYRHPKPKDEISHFANAAYEDHSFPKASTDYHELSVYLELNGDYLSSMTTFDEAFEQYDVEVKKK.

Belongs to the UPF0346 family.

The polypeptide is UPF0346 protein BPUM_1890 (Bacillus pumilus (strain SAFR-032)).